Reading from the N-terminus, the 309-residue chain is Ribosomal RNA small subunit methyltransferase H (309 aa).

Residues 33-35 (GGH), Asp-53, Phe-79, Asp-100, and Gln-107 contribute to the S-adenosyl-L-methionine site.

This sequence belongs to the methyltransferase superfamily. RsmH family.

Its subcellular location is the cytoplasm. The catalysed reaction is cytidine(1402) in 16S rRNA + S-adenosyl-L-methionine = N(4)-methylcytidine(1402) in 16S rRNA + S-adenosyl-L-homocysteine + H(+). Its function is as follows. Specifically methylates the N4 position of cytidine in position 1402 (C1402) of 16S rRNA. The polypeptide is Ribosomal RNA small subunit methyltransferase H (Clostridium botulinum (strain Langeland / NCTC 10281 / Type F)).